The chain runs to 142 residues: MFIGEYNHALDTKNRIIIPSKFREELGDNFILTKGLDGCLYVYPLGEWKVLEEKLKKLPLTNHNARAFVRFFFSGANEVSLDKQGRVLVPQNLIEYASINKEIISIGVSTRIEIWSKEKWVEYNESSVDMNAIAEKMSELGI.

SpoVT-AbrB domains lie at 5-47 (EYNH…PLGE) and 76-119 (ANEV…SKEK).

It belongs to the MraZ family. Forms oligomers.

It is found in the cytoplasm. The protein localises to the nucleoid. The chain is Transcriptional regulator MraZ from Clostridium acetobutylicum (strain ATCC 824 / DSM 792 / JCM 1419 / IAM 19013 / LMG 5710 / NBRC 13948 / NRRL B-527 / VKM B-1787 / 2291 / W).